Reading from the N-terminus, the 248-residue chain is Probable transcriptional regulatory protein Syncc9902_0542 (248 aa).

It belongs to the TACO1 family.

The protein resides in the cytoplasm. This Synechococcus sp. (strain CC9902) protein is Probable transcriptional regulatory protein Syncc9902_0542.